Reading from the N-terminus, the 103-residue chain is RNA-binding protein Hfq (103 aa).

Residues 9–68 (DPFLNALRRERVPVSIYLVNGIKLQGQIESFDQFVILLKNTVSQMVYKHAISTVVPSRPV) form the Sm domain. Positions 63-103 (VPSRPVSHHSNNAGGGTGSNFHHGSNAQGSSAPAQDSDETE) are disordered. A compositionally biased stretch (polar residues) spans 81 to 96 (SNFHHGSNAQGSSAPA).

Belongs to the Hfq family. In terms of assembly, homohexamer.

RNA chaperone that binds small regulatory RNA (sRNAs) and mRNAs to facilitate mRNA translational regulation in response to envelope stress, environmental stress and changes in metabolite concentrations. Also binds with high specificity to tRNAs. In Enterobacter sp. (strain 638), this protein is RNA-binding protein Hfq.